The sequence spans 456 residues: Exodeoxyribonuclease 7 large subunit (456 aa).

The protein belongs to the XseA family. Heterooligomer composed of large and small subunits.

Its subcellular location is the cytoplasm. It catalyses the reaction Exonucleolytic cleavage in either 5'- to 3'- or 3'- to 5'-direction to yield nucleoside 5'-phosphates.. Bidirectionally degrades single-stranded DNA into large acid-insoluble oligonucleotides, which are then degraded further into small acid-soluble oligonucleotides. This is Exodeoxyribonuclease 7 large subunit from Shigella boydii serotype 4 (strain Sb227).